Here is a 270-residue protein sequence, read N- to C-terminus: Aquaporin-11 (270 aa).

2 helical membrane passes run 5 to 25 (IMTM…ISIC) and 59 to 79 (FELG…GLFF). The NPA 1 signature appears at 94–96 (DPS). The chain crosses the membrane as a helical span at residues 120 to 140 (IMGAAVSYRFAKIFWSFGLMA). Asn-148 is a glycosylation site (N-linked (GlcNAc...) asparagine). 2 helical membrane passes run 153–173 (ASLQ…TIVN) and 184–204 (MLIS…VSGG). Residues 207 to 209 (NPT) carry the NPA 2 motif. The chain crosses the membrane as a helical span at residues 220–240 (GLSGPSFFLVYWFGPILGSSI).

The protein belongs to the MIP/aquaporin (TC 1.A.8) family.

The protein localises to the membrane. The enzyme catalyses H2O(in) = H2O(out). Its function is as follows. Probable intracellular unorthodox aquaporin that may modulate the water content and osmolytes during anhydrobiosis. This Milnesium tardigradum (Water bear) protein is Aquaporin-11.